A 243-amino-acid polypeptide reads, in one-letter code: HTH-type transcriptional regulator MlrA (243 aa).

In terms of domain architecture, HTH merR-type spans 3 to 72; it reads LYTIGEVALL…VSKVKVLLSS (70 aa). Residues 6-25 constitute a DNA-binding region (H-T-H motif); that stretch reads IGEVALLCDINPVTLRAWQR.

Functionally, transcriptional activator of csgD, which is required for production of the curli (AgF). The chain is HTH-type transcriptional regulator MlrA from Salmonella typhimurium (strain SL1344).